The sequence spans 247 residues: 2,3-bisphosphoglycerate-dependent phosphoglycerate mutase (247 aa).

Residues 9 to 16 (RHGESEWN), 22 to 23 (TG), arginine 61, 88 to 91 (ERHY), lysine 99, 115 to 116 (RR), and 183 to 184 (GN) contribute to the substrate site. The active-site Tele-phosphohistidine intermediate is histidine 10. Glutamate 88 functions as the Proton donor/acceptor in the catalytic mechanism.

The protein belongs to the phosphoglycerate mutase family. BPG-dependent PGAM subfamily.

The enzyme catalyses (2R)-2-phosphoglycerate = (2R)-3-phosphoglycerate. It functions in the pathway carbohydrate degradation; glycolysis; pyruvate from D-glyceraldehyde 3-phosphate: step 3/5. Catalyzes the interconversion of 2-phosphoglycerate and 3-phosphoglycerate. In Nocardioides sp. (strain ATCC BAA-499 / JS614), this protein is 2,3-bisphosphoglycerate-dependent phosphoglycerate mutase.